Consider the following 417-residue polypeptide: uncharacterized protein (417 aa).

A run of 9 helical transmembrane segments spans residues 1–21 (MSVL…VLLS), 32–52 (VVGA…VPAG), 96–116 (VLPI…LGIM), 168–188 (LFAI…AGYA), 192–212 (VPLT…LLFA), 261–281 (IAFV…GGWF), 286–306 (LTLQ…IGVT), 351–371 (AIIT…ILIG), and 392–412 (VIAG…FIGL).

It belongs to the concentrative nucleoside transporter (CNT) (TC 2.A.41) family.

It is found in the cell inner membrane. This is an uncharacterized protein from Haemophilus influenzae (strain ATCC 51907 / DSM 11121 / KW20 / Rd).